Here is a 346-residue protein sequence, read N- to C-terminus: UDP-N-acetylenolpyruvoylglucosamine reductase (346 aa).

The FAD-binding PCMH-type domain occupies 23-194 (FDVRARLACR…VSVTFRLPKV (172 aa)). Arginine 170 is a catalytic residue. Residue serine 246 is the Proton donor of the active site. Glutamate 342 is an active-site residue.

This sequence belongs to the MurB family. The cofactor is FAD.

The protein resides in the cytoplasm. It carries out the reaction UDP-N-acetyl-alpha-D-muramate + NADP(+) = UDP-N-acetyl-3-O-(1-carboxyvinyl)-alpha-D-glucosamine + NADPH + H(+). Its pathway is cell wall biogenesis; peptidoglycan biosynthesis. Functionally, cell wall formation. The chain is UDP-N-acetylenolpyruvoylglucosamine reductase from Paraburkholderia phymatum (strain DSM 17167 / CIP 108236 / LMG 21445 / STM815) (Burkholderia phymatum).